The chain runs to 368 residues: Histidinol-phosphate aminotransferase (368 aa).

Position 228 is an N6-(pyridoxal phosphate)lysine (lysine 228).

The protein belongs to the class-II pyridoxal-phosphate-dependent aminotransferase family. Histidinol-phosphate aminotransferase subfamily. Homodimer. It depends on pyridoxal 5'-phosphate as a cofactor.

The catalysed reaction is L-histidinol phosphate + 2-oxoglutarate = 3-(imidazol-4-yl)-2-oxopropyl phosphate + L-glutamate. The protein operates within amino-acid biosynthesis; L-histidine biosynthesis; L-histidine from 5-phospho-alpha-D-ribose 1-diphosphate: step 7/9. The polypeptide is Histidinol-phosphate aminotransferase (hisC) (Methylobacillus flagellatus).